Here is a 308-residue protein sequence, read N- to C-terminus: Ribosomal RNA small subunit methyltransferase H (308 aa).

S-adenosyl-L-methionine is bound by residues glycine 38–histidine 40, aspartate 58, phenylalanine 82, aspartate 99, and glutamine 106.

This sequence belongs to the methyltransferase superfamily. RsmH family.

Its subcellular location is the cytoplasm. The enzyme catalyses cytidine(1402) in 16S rRNA + S-adenosyl-L-methionine = N(4)-methylcytidine(1402) in 16S rRNA + S-adenosyl-L-homocysteine + H(+). Specifically methylates the N4 position of cytidine in position 1402 (C1402) of 16S rRNA. This Acidovorax ebreus (strain TPSY) (Diaphorobacter sp. (strain TPSY)) protein is Ribosomal RNA small subunit methyltransferase H.